The chain runs to 152 residues: Protein-export protein SecB (152 aa).

The protein belongs to the SecB family. Homotetramer, a dimer of dimers. One homotetramer interacts with 1 SecA dimer.

Its subcellular location is the cytoplasm. In terms of biological role, one of the proteins required for the normal export of preproteins out of the cell cytoplasm. It is a molecular chaperone that binds to a subset of precursor proteins, maintaining them in a translocation-competent state. It also specifically binds to its receptor SecA. The chain is Protein-export protein SecB from Rickettsia africae (strain ESF-5).